Here is a 96-residue protein sequence, read N- to C-terminus: MSAVTPCADGLILRLYIQPKASRDSIVGLHGDEVKVAITAPPVDGQANSHLVKFLGKQFRVAKSQVVIEKGELGRHKQVKIIHPQQIPPEIAALTD.

The protein belongs to the UPF0235 family.

This is UPF0235 protein CKO_04329 from Citrobacter koseri (strain ATCC BAA-895 / CDC 4225-83 / SGSC4696).